A 1144-amino-acid chain; its full sequence is ATP-dependent helicase/deoxyribonuclease subunit B (1144 aa).

The UvrD-like helicase ATP-binding domain maps to 1–276 (MAIRYVFGRA…IDLDRNERPV (276 aa)). Position 8–15 (8–15 (GRAGRGKS)) interacts with ATP. Positions 274 to 584 (RPVLPKVQEI…LVGSIERSKS (311 aa)) constitute a UvrD-like helicase C-terminal domain. The [4Fe-4S] cluster site is built by Cys784, Cys1102, Cys1105, and Cys1111.

The protein belongs to the helicase family. AddB/RexB type 1 subfamily. In terms of assembly, heterodimer of AddA and AddB. The cofactor is Mg(2+). [4Fe-4S] cluster is required as a cofactor.

Its function is as follows. The heterodimer acts as both an ATP-dependent DNA helicase and an ATP-dependent, dual-direction single-stranded exonuclease. Recognizes the chi site generating a DNA molecule suitable for the initiation of homologous recombination. The AddB subunit has 5' -&gt; 3' nuclease activity but not helicase activity. The protein is ATP-dependent helicase/deoxyribonuclease subunit B of Alkaliphilus oremlandii (strain OhILAs) (Clostridium oremlandii (strain OhILAs)).